A 221-amino-acid polypeptide reads, in one-letter code: NAD(P)H-hydrate epimerase (221 aa).

The region spanning 10 to 210 (MQQIDNYTIE…DVGMLIPDDF (201 aa)) is the YjeF N-terminal domain. 58–62 (NNGAD) contacts (6S)-NADPHX. K(+) contacts are provided by N59 and D120. (6S)-NADPHX-binding positions include 124–130 (GVGLNNV) and D153. T156 serves as a coordination point for K(+).

The protein belongs to the NnrE/AIBP family. K(+) is required as a cofactor.

The catalysed reaction is (6R)-NADHX = (6S)-NADHX. It carries out the reaction (6R)-NADPHX = (6S)-NADPHX. Functionally, catalyzes the epimerization of the S- and R-forms of NAD(P)HX, a damaged form of NAD(P)H that is a result of enzymatic or heat-dependent hydration. This is a prerequisite for the S-specific NAD(P)H-hydrate dehydratase to allow the repair of both epimers of NAD(P)HX. The chain is NAD(P)H-hydrate epimerase from Leuconostoc mesenteroides subsp. mesenteroides (strain ATCC 8293 / DSM 20343 / BCRC 11652 / CCM 1803 / JCM 6124 / NCDO 523 / NBRC 100496 / NCIMB 8023 / NCTC 12954 / NRRL B-1118 / 37Y).